The chain runs to 111 residues: MSALQAYRHLMRAARVAFDGDNRTLTAAYESIRRGFRENQNVPANDPTIAPAIAHAEEVASFLRSNVVQGRKDGETYKLRIHQDTERGDNDTIKLGNQTIKIGGEQKCCSA.

It belongs to the complex I LYR family. MZM1 subfamily. Interacts with RIP1.

It is found in the mitochondrion matrix. Functionally, assembly factor required for Rieske Fe-S protein RIP1 incorporation into the cytochrome b-c1 (CIII) complex. Functions as a chaperone, binding to this subunit within the mitochondrial matrix and stabilizing it prior to its translocation and insertion into the late CIII dimeric intermediate within the mitochondrial inner membrane. Modulates the mitochondrial matrix zinc pool. The polypeptide is Mitochondrial zinc maintenance protein 1, mitochondrial (mzm1) (Neurospora crassa (strain ATCC 24698 / 74-OR23-1A / CBS 708.71 / DSM 1257 / FGSC 987)).